A 339-amino-acid chain; its full sequence is Fructose-1,6-bisphosphatase class 1 (339 aa).

Mg(2+)-binding residues include glutamate 91, aspartate 113, leucine 115, and aspartate 116. Residues 116 to 119, asparagine 210, and lysine 276 contribute to the substrate site; that span reads DGSS. Glutamate 282 serves as a coordination point for Mg(2+).

This sequence belongs to the FBPase class 1 family. As to quaternary structure, homotetramer. Requires Mg(2+) as cofactor.

The protein localises to the cytoplasm. The catalysed reaction is beta-D-fructose 1,6-bisphosphate + H2O = beta-D-fructose 6-phosphate + phosphate. The protein operates within carbohydrate biosynthesis; gluconeogenesis. This Bordetella bronchiseptica (strain ATCC BAA-588 / NCTC 13252 / RB50) (Alcaligenes bronchisepticus) protein is Fructose-1,6-bisphosphatase class 1.